The chain runs to 429 residues: Small ribosomal subunit protein uS5m (429 aa).

The tract at residues 108–127 is disordered; sequence AGAKKGRGKRTKKKKRKDLN. Residues 111–125 show a composition bias toward basic residues; sequence KKGRGKRTKKKKRKD. The region spanning 218-282 is the S5 DRBM domain; the sequence is FDTRILEVRN…NRAVHHLYYI (65 aa).

The protein belongs to the universal ribosomal protein uS5 family. In terms of assembly, component of the mitochondrial ribosome small subunit (28S) which comprises a 12S rRNA and about 30 distinct proteins.

The protein localises to the mitochondrion. The chain is Small ribosomal subunit protein uS5m (MRPS5) from Pongo abelii (Sumatran orangutan).